The following is a 93-amino-acid chain: Pyrimidine/purine nucleoside phosphorylase (93 aa).

This sequence belongs to the nucleoside phosphorylase PpnP family.

It carries out the reaction a purine D-ribonucleoside + phosphate = a purine nucleobase + alpha-D-ribose 1-phosphate. The catalysed reaction is adenosine + phosphate = alpha-D-ribose 1-phosphate + adenine. It catalyses the reaction cytidine + phosphate = cytosine + alpha-D-ribose 1-phosphate. The enzyme catalyses guanosine + phosphate = alpha-D-ribose 1-phosphate + guanine. It carries out the reaction inosine + phosphate = alpha-D-ribose 1-phosphate + hypoxanthine. The catalysed reaction is thymidine + phosphate = 2-deoxy-alpha-D-ribose 1-phosphate + thymine. It catalyses the reaction uridine + phosphate = alpha-D-ribose 1-phosphate + uracil. The enzyme catalyses xanthosine + phosphate = alpha-D-ribose 1-phosphate + xanthine. In terms of biological role, catalyzes the phosphorolysis of diverse nucleosides, yielding D-ribose 1-phosphate and the respective free bases. Can use uridine, adenosine, guanosine, cytidine, thymidine, inosine and xanthosine as substrates. Also catalyzes the reverse reactions. In Hahella chejuensis (strain KCTC 2396), this protein is Pyrimidine/purine nucleoside phosphorylase.